A 431-amino-acid polypeptide reads, in one-letter code: GDP-L-galactose phosphorylase 2 (431 aa).

The active-site Tele-GMP-histidine intermediate is His-235. The span at 398–407 (EEEEEEELEE) shows a compositional bias: acidic residues. The tract at residues 398 to 417 (EEEEEEELEEQNSMNGGSFT) is disordered.

This sequence belongs to the GDPGP1 family. As to quaternary structure, interacts with TLP1. As to expression, expressed in leaves, stems, roots, flowers and siliques.

It localises to the cytoplasm. The protein resides in the nucleus. It catalyses the reaction GDP-beta-L-galactose + phosphate = beta-L-galactose 1-phosphate + GDP + H(+). It participates in cofactor biosynthesis; L-ascorbate biosynthesis via GDP-alpha-D-mannose pathway; L-ascorbate from GDP-alpha-D-mannose: step 2/5. Catalyzes a reaction of the Smirnoff-Wheeler pathway, the major route to ascorbate biosynthesis in plants. Acts as a phosphorylase rather than as a transferase. Uses preferentially GDP-L-galactose and GDP-D-glucose as substrates. Lower activity with GDP-L-fucose, very low activity with GDP-D-mannose, and no activity with UDP-D-glucose, UDP-D-galactose or ADP-D-glucose. Highly specific for inorganic phosphate as the guanylyl acceptor. The protein is GDP-L-galactose phosphorylase 2 (VTC5) of Arabidopsis thaliana (Mouse-ear cress).